Consider the following 40-residue polypeptide: Alpha-1B-glycoprotein (40 aa).

The N-linked (GlcNAc...) asparagine glycan is linked to N23.

In terms of assembly, interacts with CRISP3. In terms of tissue distribution, plasma.

Its subcellular location is the secreted. In Sus scrofa (Pig), this protein is Alpha-1B-glycoprotein (A1BG).